A 167-amino-acid chain; its full sequence is uncharacterized protein (167 aa).

Residues 4-24 form a helical membrane-spanning segment; the sequence is IIGLFFIIILIVINISILAYD.

It is found in the membrane. This is an uncharacterized protein from Rickettsia prowazekii (strain Madrid E).